Here is a 944-residue protein sequence, read N- to C-terminus: Protocadherin gamma-C5 (944 aa).

An N-terminal signal peptide occupies residues 1–29 (MGPKTLPQLAGKWQVLCMLSLCCWGWVSG). 6 consecutive Cadherin domains span residues 30-133 (QLRY…SPSF), 134-242 (ATPE…APTF), 243-350 (QSSV…APEV), 351-454 (LLAS…APRF), 455-564 (NQQL…APAV), and 571-677 (WEHS…MPKS). The Extracellular portion of the chain corresponds to 30 to 693 (QLRYSVVEES…PPERSDLTLY (664 aa)). 3 N-linked (GlcNAc...) asparagine glycosylation sites follow: asparagine 265, asparagine 443, and asparagine 547. Residues 694–714 (LIVALATVSLLSLVTFTFLSA) traverse the membrane as a helical segment. Over 715-944 (KCLQGNADGD…KKKSGKKEKK (230 aa)) the chain is Cytoplasmic. Disordered regions lie at residues 722 to 747 (DGDGGGGQCCRRQDSPSPDFYKQSSP), 812 to 853 (SNTL…WPNN), and 914 to 944 (ATLTNAAGKRDGKAPAGGNGNKKKSGKKEKK). A compositionally biased stretch (polar residues) spans 820–853 (QQAPPNTDWRFSQAQRPGTSGSQNGDDTGTWPNN). The span at 934–944 (NKKKSGKKEKK) shows a compositional bias: basic residues.

The protein localises to the cell membrane. In terms of biological role, potential calcium-dependent cell-adhesion protein. May be involved in the establishment and maintenance of specific neuronal connections in the brain. The chain is Protocadherin gamma-C5 (PCDHGC5) from Pan troglodytes (Chimpanzee).